The sequence spans 335 residues: MAKRYLLDFEKPLVELEKQIEQIKELARDSEVDVSQQLLQLETLAARRREEIFKSLTPAQKIQVARHPQRPSTLDFVQMFCDDWIELHGDRNGGDDMALIGGIGSINNRPVLMLGHQKGRDTKENVVRNFGMAKPGGYRKALRLMQHANRFALPILTFIDTPGAYAGLKAEEQGQGEAIARNLREMFGLKVPIVATVIGEGGSGGALGIGVADRLLMFEHSVYTVASPEACASILWRDAAKAPEAASALKITGNDLLKLGIIDEVLPEPSGGNNWAPLDAGNTLKEAIEKHLNALLQMPEDQLIEERYKKFRILGKFIEANNIEEIYSEIPQKTE.

The CoA carboxyltransferase C-terminal domain maps to 40–294 (QLETLAARRR…KEAIEKHLNA (255 aa)).

This sequence belongs to the AccA family. In terms of assembly, acetyl-CoA carboxylase is a heterohexamer composed of biotin carboxyl carrier protein (AccB), biotin carboxylase (AccC) and two subunits each of ACCase subunit alpha (AccA) and ACCase subunit beta (AccD).

The protein localises to the cytoplasm. It carries out the reaction N(6)-carboxybiotinyl-L-lysyl-[protein] + acetyl-CoA = N(6)-biotinyl-L-lysyl-[protein] + malonyl-CoA. It functions in the pathway lipid metabolism; malonyl-CoA biosynthesis; malonyl-CoA from acetyl-CoA: step 1/1. Functionally, component of the acetyl coenzyme A carboxylase (ACC) complex. First, biotin carboxylase catalyzes the carboxylation of biotin on its carrier protein (BCCP) and then the CO(2) group is transferred by the carboxyltransferase to acetyl-CoA to form malonyl-CoA. In Prochlorococcus marinus (strain AS9601), this protein is Acetyl-coenzyme A carboxylase carboxyl transferase subunit alpha.